The chain runs to 356 residues: GMP reductase (356 aa).

NADP(+) contacts are provided by residues 26 to 27 (SR), Lys-78, 132 to 134 (DVA), and 183 to 184 (IG). K(+) is bound by residues Gly-184, Gly-186, and Cys-189. Cys-189 functions as the Thioimidate intermediate in the catalytic mechanism. The active-site Proton donor/acceptor is Thr-191. K(+) is bound at residue Arg-192. GMP-binding positions include 222-224 (DGG), 245-246 (GG), 271-273 (GMS), and 289-293 (RASEG). NADP(+) is bound by residues Met-272, 288 to 289 (YR), and 317 to 320 (SACT).

The protein belongs to the IMPDH/GMPR family.

The catalysed reaction is IMP + NH4(+) + NADP(+) = GMP + NADPH + 2 H(+). Functionally, catalyzes the irreversible NADPH-dependent deamination of GMP to IMP. It functions in the conversion of nucleobase, nucleoside and nucleotide derivatives of G to A nucleotides, and in maintaining the intracellular balance of A and G nucleotides. This Ascaris suum (Pig roundworm) protein is GMP reductase.